The following is a 320-amino-acid chain: Formimidoylglutamase (320 aa).

6 residues coordinate Mn(2+): H125, D153, H155, D157, D244, and D246.

It belongs to the arginase family. The cofactor is Mn(2+).

The catalysed reaction is N-formimidoyl-L-glutamate + H2O = formamide + L-glutamate. The protein operates within amino-acid degradation; L-histidine degradation into L-glutamate; L-glutamate from N-formimidoyl-L-glutamate (hydrolase route): step 1/1. Functionally, catalyzes the conversion of N-formimidoyl-L-glutamate to L-glutamate and formamide. This chain is Formimidoylglutamase, found in Rhodococcus opacus (strain B4).